We begin with the raw amino-acid sequence, 338 residues long: Mitochondrial glutathione transporter SLC25A40 (338 aa).

Solcar repeat units lie at residues 13-131, 139-223, and 233-327; these read VTPL…LTAL, NESR…LKKW, and PTFM…GKSF. A run of 6 helical transmembrane segments spans residues 19-39, 103-123, 145-165, 199-220, 239-259, and 298-318; these read MFASCTGAILTSLMVTPFDVV, LWSGLPPTLVMAVPATVIYFT, IVAGIVARLGAVTVISPLELI, WAPTILRDVPFSAMYWYNYEVL, FTSGALSGSFAAVVTLPFDVV, and GLFTGLIPRLIKIAPACAVMI.

The protein belongs to the mitochondrial carrier (TC 2.A.29) family.

The protein resides in the mitochondrion inner membrane. The catalysed reaction is glutathione(in) = glutathione(out). In terms of biological role, probable mitochondrial transporter required for glutathione import into mitochondria. Glutathione, which plays key roles in oxidative metabolism, is produced exclusively in the cytosol and is imported in many organelles. Mitochondrial glutathione is required for the activity and stability of proteins containing iron-sulfur clusters, as well as erythropoiesis. This Bos taurus (Bovine) protein is Mitochondrial glutathione transporter SLC25A40.